Here is a 417-residue protein sequence, read N- to C-terminus: Serine hydroxymethyltransferase (417 aa).

(6S)-5,6,7,8-tetrahydrofolate-binding positions include leucine 120 and 124–126 (GHL). N6-(pyridoxal phosphate)lysine is present on lysine 229. Residue 354–356 (SPF) participates in (6S)-5,6,7,8-tetrahydrofolate binding.

The protein belongs to the SHMT family. Homodimer. Pyridoxal 5'-phosphate is required as a cofactor.

The protein resides in the cytoplasm. The enzyme catalyses (6R)-5,10-methylene-5,6,7,8-tetrahydrofolate + glycine + H2O = (6S)-5,6,7,8-tetrahydrofolate + L-serine. It functions in the pathway one-carbon metabolism; tetrahydrofolate interconversion. The protein operates within amino-acid biosynthesis; glycine biosynthesis; glycine from L-serine: step 1/1. Functionally, catalyzes the reversible interconversion of serine and glycine with tetrahydrofolate (THF) serving as the one-carbon carrier. This reaction serves as the major source of one-carbon groups required for the biosynthesis of purines, thymidylate, methionine, and other important biomolecules. Also exhibits THF-independent aldolase activity toward beta-hydroxyamino acids, producing glycine and aldehydes, via a retro-aldol mechanism. In Acinetobacter baylyi (strain ATCC 33305 / BD413 / ADP1), this protein is Serine hydroxymethyltransferase.